The primary structure comprises 196 residues: Peptidyl-tRNA hydrolase (196 aa).

Tyr-18 provides a ligand contact to tRNA. His-23 (proton acceptor) is an active-site residue. 3 residues coordinate tRNA: Phe-69, Asn-71, and Asn-117.

Belongs to the PTH family. Monomer.

Its subcellular location is the cytoplasm. The enzyme catalyses an N-acyl-L-alpha-aminoacyl-tRNA + H2O = an N-acyl-L-amino acid + a tRNA + H(+). Its function is as follows. Hydrolyzes ribosome-free peptidyl-tRNAs (with 1 or more amino acids incorporated), which drop off the ribosome during protein synthesis, or as a result of ribosome stalling. Functionally, catalyzes the release of premature peptidyl moieties from peptidyl-tRNA molecules trapped in stalled 50S ribosomal subunits, and thus maintains levels of free tRNAs and 50S ribosomes. The polypeptide is Peptidyl-tRNA hydrolase (Vibrio cholerae serotype O1 (strain ATCC 39315 / El Tor Inaba N16961)).